Here is a 202-residue protein sequence, read N- to C-terminus: ATP-dependent Clp protease proteolytic subunit (202 aa).

Ser-101 functions as the Nucleophile in the catalytic mechanism. Residue His-126 is part of the active site.

It belongs to the peptidase S14 family. In terms of assembly, component of the chloroplastic Clp protease core complex.

Its subcellular location is the plastid. It localises to the chloroplast stroma. The enzyme catalyses Hydrolysis of proteins to small peptides in the presence of ATP and magnesium. alpha-casein is the usual test substrate. In the absence of ATP, only oligopeptides shorter than five residues are hydrolyzed (such as succinyl-Leu-Tyr-|-NHMec, and Leu-Tyr-Leu-|-Tyr-Trp, in which cleavage of the -Tyr-|-Leu- and -Tyr-|-Trp bonds also occurs).. Cleaves peptides in various proteins in a process that requires ATP hydrolysis. Has a chymotrypsin-like activity. Plays a major role in the degradation of misfolded proteins. The sequence is that of ATP-dependent Clp protease proteolytic subunit from Liriodendron tulipifera (Tuliptree).